We begin with the raw amino-acid sequence, 195 residues long: Thymidine kinase (195 aa).

ATP is bound by residues 9 to 16 (STMNAGKS) and 87 to 90 (DEAQ). The active-site Proton acceptor is Glu-88. The Zn(2+) site is built by Cys-145, Cys-147, Cys-182, and His-185.

Belongs to the thymidine kinase family. As to quaternary structure, homotetramer.

The protein resides in the cytoplasm. It carries out the reaction thymidine + ATP = dTMP + ADP + H(+). This chain is Thymidine kinase, found in Mannheimia succiniciproducens (strain KCTC 0769BP / MBEL55E).